The primary structure comprises 473 residues: Proline--tRNA ligase (473 aa).

The protein belongs to the class-II aminoacyl-tRNA synthetase family. ProS type 3 subfamily. As to quaternary structure, homodimer.

The protein localises to the cytoplasm. The catalysed reaction is tRNA(Pro) + L-proline + ATP = L-prolyl-tRNA(Pro) + AMP + diphosphate. Functionally, catalyzes the attachment of proline to tRNA(Pro) in a two-step reaction: proline is first activated by ATP to form Pro-AMP and then transferred to the acceptor end of tRNA(Pro). The chain is Proline--tRNA ligase from Mesoplasma florum (strain ATCC 33453 / NBRC 100688 / NCTC 11704 / L1) (Acholeplasma florum).